The primary structure comprises 349 residues: Aspartate-semialdehyde dehydrogenase (349 aa).

Residues 12-15 (TGSV) and 39-40 (NS) each bind NADP(+). R113 lines the phosphate pocket. C148 functions as the Acyl-thioester intermediate in the catalytic mechanism. Residue Q175 coordinates substrate. 178 to 179 (SG) lines the NADP(+) pocket. E201 contacts substrate. K204 contacts phosphate. Substrate is bound at residue R234. H241 serves as the catalytic Proton acceptor. Position 326-327 (326-327 (NT)) interacts with NADP(+).

The protein belongs to the aspartate-semialdehyde dehydrogenase family. Homodimer.

The catalysed reaction is L-aspartate 4-semialdehyde + phosphate + NADP(+) = 4-phospho-L-aspartate + NADPH + H(+). It functions in the pathway amino-acid biosynthesis; L-lysine biosynthesis via DAP pathway; (S)-tetrahydrodipicolinate from L-aspartate: step 2/4. The protein operates within amino-acid biosynthesis; L-methionine biosynthesis via de novo pathway; L-homoserine from L-aspartate: step 2/3. It participates in amino-acid biosynthesis; L-threonine biosynthesis; L-threonine from L-aspartate: step 2/5. Its function is as follows. Catalyzes the NADPH-dependent formation of L-aspartate-semialdehyde (L-ASA) by the reductive dephosphorylation of L-aspartyl-4-phosphate. The sequence is that of Aspartate-semialdehyde dehydrogenase from Leptospira interrogans serogroup Icterohaemorrhagiae serovar copenhageni (strain Fiocruz L1-130).